Consider the following 168-residue polypeptide: G/U mismatch-specific DNA glycosylase (168 aa).

Belongs to the uracil-DNA glycosylase (UDG) superfamily. TDG/mug family. As to quaternary structure, binds DNA as a monomer.

The protein resides in the cytoplasm. The enzyme catalyses Specifically hydrolyzes mismatched double-stranded DNA and polynucleotides, releasing free uracil.. In terms of biological role, excises ethenocytosine and uracil, which can arise by alkylation or deamination of cytosine, respectively, from the corresponding mispairs with guanine in ds-DNA. It is capable of hydrolyzing the carbon-nitrogen bond between the sugar-phosphate backbone of the DNA and the mispaired base. The complementary strand guanine functions in substrate recognition. Required for DNA damage lesion repair in stationary-phase cells. The sequence is that of G/U mismatch-specific DNA glycosylase from Escherichia coli (strain UTI89 / UPEC).